Here is a 295-residue protein sequence, read N- to C-terminus: Perivine-Nbeta-methyltransferase (295 aa).

The SAM motif I stretch occupies residues Ile76–Gly85. The Vacuolar targeting signal signature appears at Asp138 to Ile144. The tract at residues Gly139–Ile147 is SAM motif II. Residues Val166–Ile175 form an SAM motif III region.

It belongs to the class I-like SAM-binding methyltransferase superfamily. gTMT family. As to quaternary structure, homodimer. In terms of tissue distribution, mainly expressed in young leaves, and, to a lower extent, in mature leaves, flowers, stems and roots (at protein level). Transcripts levels are highest in flowers, moderate in leaves and low in roots and stems.

The protein localises to the vacuole membrane. It catalyses the reaction perivine + S-adenosyl-L-methionine = vobasine + S-adenosyl-L-homocysteine + 2 H(+). It functions in the pathway alkaloid biosynthesis; vindoline biosynthesis. Functionally, S-adenosyl-L-methionine-dependent N-methyltransferase involved in the biosynthesis of biologically active monoterpenoid indole alkaloids (MIAs) natural products including vindoline. Catalyzes the conversion of perivine to Nbeta-methylperivine (vobasine) by methylating its N4 nitrogen. Inactive with picrinine as substrate. This Catharanthus roseus (Madagascar periwinkle) protein is Perivine-Nbeta-methyltransferase.